The following is a 107-amino-acid chain: RecQ-mediated genome instability protein 2 homolog (107 aa).

The protein belongs to the RMI2 family. Component of the RMI complex, containing at least top-3, rmh-1 and rmh-2. Component of the BTR double Holliday Junction dissolution complex composed of at least him-6, top-3, rmh-1 and rmif-2, which is involved in double strand break repair in the germline. Interacts with rmh-1; the interaction is direct and is required for mutual stability and localization at nuclear foci. In terms of tissue distribution, expressed in the germline.

It localises to the nucleus. Functionally, essential component of the RMI complex, a complex that plays an important role in the processing of homologous recombination intermediates. Component of the BTR double Holliday Junction dissolution complex, which is involved in homologous recombination during meiotic double strand break in the germline. Plays a role in double strand break repair by positively regulating the accumulation of rad-51 at double strand breaks. Stabilizes and positively regulates the localization of the BTR double Holliday Junction dissolution complex components rmh-1, him-6 and top-3 at nuclear foci during meiotic recombination. Positively regulates meiotic recombination, chiasma formation, and chromosome segregation in meiosis. Positively regulates DNA crossover formation and positioning on chromosome arms (away from the chromosome center) during homologous recombination. The sequence is that of RecQ-mediated genome instability protein 2 homolog from Caenorhabditis elegans.